The following is a 161-amino-acid chain: Putative acetyltransferase SAV0762 (161 aa).

This sequence belongs to the transferase hexapeptide repeat family.

The sequence is that of Putative acetyltransferase SAV0762 from Staphylococcus aureus (strain Mu50 / ATCC 700699).